The sequence spans 658 residues: Translin-associated factor X-interacting protein 1 (658 aa).

Coiled-coil stretches lie at residues 144–184 (EISL…AEEY) and 230–295 (ALKM…LMQL).

Interacts with TSNAX.

It localises to the cytoplasm. The protein resides in the perinuclear region. Its function is as follows. Possible role in spermatogenesis. The protein is Translin-associated factor X-interacting protein 1 of Homo sapiens (Human).